Here is a 507-residue protein sequence, read N- to C-terminus: Histidine ammonia-lyase (507 aa).

The 5-imidazolinone (Ala-Gly) cross-link spans Ala141–Gly143. Residue Ser142 is modified to 2,3-didehydroalanine (Ser).

Belongs to the PAL/histidase family. Contains an active site 4-methylidene-imidazol-5-one (MIO), which is formed autocatalytically by cyclization and dehydration of residues Ala-Ser-Gly.

Its subcellular location is the cytoplasm. It catalyses the reaction L-histidine = trans-urocanate + NH4(+). It functions in the pathway amino-acid degradation; L-histidine degradation into L-glutamate; N-formimidoyl-L-glutamate from L-histidine: step 1/3. This Burkholderia orbicola (strain MC0-3) protein is Histidine ammonia-lyase.